The following is a 374-amino-acid chain: Alcohol dehydrogenase 3, mitochondrial (374 aa).

A mitochondrion-targeting transit peptide spans 1 to 26; the sequence is MLRLTSARSIVSPLRKGAFGSIRTLA. Residues cysteine 70, histidine 93, cysteine 124, cysteine 127, cysteine 130, cysteine 138, and cysteine 180 each contribute to the Zn(2+) site. Residues 204–210, aspartate 228, lysine 233, 295–297, and arginine 367 contribute to the NAD(+) site; these read GAAGGLG and VGL.

It belongs to the zinc-containing alcohol dehydrogenase family. As to quaternary structure, homotetramer. Zn(2+) serves as cofactor.

Its subcellular location is the mitochondrion matrix. The catalysed reaction is a primary alcohol + NAD(+) = an aldehyde + NADH + H(+). It carries out the reaction a secondary alcohol + NAD(+) = a ketone + NADH + H(+). The protein is Alcohol dehydrogenase 3, mitochondrial (ADH3) of Kluyveromyces lactis (strain ATCC 8585 / CBS 2359 / DSM 70799 / NBRC 1267 / NRRL Y-1140 / WM37) (Yeast).